A 311-amino-acid polypeptide reads, in one-letter code: 33 kDa chaperonin (311 aa).

Intrachain disulfides connect cysteine 240/cysteine 242 and cysteine 273/cysteine 276.

The protein belongs to the HSP33 family. In terms of processing, under oxidizing conditions two disulfide bonds are formed involving the reactive cysteines. Under reducing conditions zinc is bound to the reactive cysteines and the protein is inactive.

The protein resides in the cytoplasm. Its function is as follows. Redox regulated molecular chaperone. Protects both thermally unfolding and oxidatively damaged proteins from irreversible aggregation. Plays an important role in the bacterial defense system toward oxidative stress. This chain is 33 kDa chaperonin, found in Trichodesmium erythraeum (strain IMS101).